The chain runs to 476 residues: Lactate utilization protein B (476 aa).

2 4Fe-4S ferredoxin-type domains span residues 304 to 334 (GTEFQPVLQCIRCAACVNVCPVYRHIGGHSY) and 353 to 382 (YDDYKELPYASSLCAACTEACPVKIPLHEL). [4Fe-4S] cluster contacts are provided by Cys-313, Cys-316, Cys-319, Cys-323, Cys-366, Cys-369, and Cys-373. Residues 440–476 (KGPGPLKAWTESREFPAPSKERFRDWFQTRQKGGNPS) form a disordered region. A compositionally biased stretch (basic and acidic residues) spans 449-466 (TESREFPAPSKERFRDWF). Polar residues predominate over residues 467 to 476 (QTRQKGGNPS).

The protein belongs to the LutB/YkgF family.

Its function is as follows. Is involved in L-lactate degradation and allows cells to grow with lactate as the sole carbon source. Has probably a role as an electron transporter during oxidation of L-lactate. The protein is Lactate utilization protein B of Geobacillus kaustophilus (strain HTA426).